The chain runs to 252 residues: Carbohydrate deacetylase (252 aa).

Histidine 59 and histidine 122 together coordinate Mg(2+).

The protein belongs to the YdjC deacetylase family. In terms of assembly, homodimer. Mg(2+) is required as a cofactor.

Functionally, probably catalyzes the deacetylation of acetylated carbohydrates an important step in the degradation of oligosaccharides. In Vibrio vulnificus (strain CMCP6), this protein is Carbohydrate deacetylase.